The following is a 255-amino-acid chain: tRNA pseudouridine synthase A (255 aa).

Asp53 serves as the catalytic Nucleophile. Tyr113 lines the substrate pocket.

Belongs to the tRNA pseudouridine synthase TruA family. In terms of assembly, homodimer.

It carries out the reaction uridine(38/39/40) in tRNA = pseudouridine(38/39/40) in tRNA. In terms of biological role, formation of pseudouridine at positions 38, 39 and 40 in the anticodon stem and loop of transfer RNAs. In Acidiphilium cryptum (strain JF-5), this protein is tRNA pseudouridine synthase A.